The primary structure comprises 218 residues: Small ribosomal subunit protein uS3 (218 aa).

One can recognise a KH type-2 domain in the interval 38-106; it reads VREYINKRLQ…RVHINIVEIK (69 aa).

It belongs to the universal ribosomal protein uS3 family. Part of the 30S ribosomal subunit. Forms a tight complex with proteins S10 and S14.

In terms of biological role, binds the lower part of the 30S subunit head. Binds mRNA in the 70S ribosome, positioning it for translation. This is Small ribosomal subunit protein uS3 from Geobacillus thermodenitrificans (strain NG80-2).